The chain runs to 177 residues: Early nodulin-like protein 6 (177 aa).

The N-terminal stretch at 1-23 is a signal peptide; the sequence is MGGQKIVLLSIFVCFYVFSLVSC. Positions 24–127 constitute a Phytocyanin domain; the sequence is TEFEAGGENG…GQKMIIKVME (104 aa). N-linked (GlcNAc...) asparagine glycosylation occurs at Asn41. A disulfide bond links Cys81 and Cys115. A lipid anchor (GPI-anchor amidated asparagine) is attached at Asn149. Residues 150–177 constitute a propeptide, removed in mature form; sequence HAVRKTSRFLGAGLVTISILVITVFSLV.

Belongs to the early nodulin-like (ENODL) family. Confined to flowers.

The protein localises to the cell membrane. Its function is as follows. May act as a carbohydrate transporter. The protein is Early nodulin-like protein 6 of Arabidopsis thaliana (Mouse-ear cress).